A 486-amino-acid chain; its full sequence is B-type cell cycle switch protein ccs52B (486 aa).

The short motif at 24–36 (RLETLSTPPSSAS) is the PEST motif element. Residues 27–36 (TLSTPPSSAS) are compositionally biased toward polar residues. The interval 27 to 57 (TLSTPPSSASPRAISNLSSTPSPSKSSKCSD) is disordered. The segment covering 41–53 (SNLSSTPSPSKSS) has biased composition (low complexity). The short motif at 57-63 (DRFIPCR) is the C-box element. Residues 87–98 (AYNRLLKSELFG) carry the CSM motif motif. WD repeat units lie at residues 177–214 (QDDFYLNLVDWSSQNTLAVGLGTCVYLWSASNSKVTKL), 218–257 (GPYDGVCSVQWTKEGSFISIGTNGGQVQIWDGTKCKKVRT), 260–297 (GHQTRTGVLAWNSRILASGSRDRNILQHDMRVPSDFIG), 301–340 (GHKSEVCGLKWSCDDRELASGGNDNQLLVWNQHSQQPTLR), 343–385 (EHTA…QLNS), 387–428 (DTGS…KVAT), and 431–470 (GHSMRVLYLAMSPDGQTIVTGAGDETLRFWNVFPSMKTPA).

Belongs to the WD repeat CDC20/Fizzy family. In terms of tissue distribution, mostly expressed in shoot apices and, to a lower extent, in roots, especially in root tips, and in hypocotyls. Expressed in nodulation-competent root zone but not in the nodules.

The protein operates within protein modification; protein ubiquitination. Component of the anaphase promoting complex/cyclosome (APC/C), a cell cycle-regulated E3 ubiquitin-protein ligase complex that controls progression through mitosis and the G1 phase of the cell cycle. In Medicago truncatula (Barrel medic), this protein is B-type cell cycle switch protein ccs52B.